We begin with the raw amino-acid sequence, 70 residues long: Large ribosomal subunit protein eL38 (70 aa).

Belongs to the eukaryotic ribosomal protein eL38 family.

The polypeptide is Large ribosomal subunit protein eL38 (RpL38) (Drosophila melanogaster (Fruit fly)).